Here is a 504-residue protein sequence, read N- to C-terminus: Lysine--tRNA ligase (504 aa).

The Mg(2+) site is built by glutamate 414 and glutamate 421.

It belongs to the class-II aminoacyl-tRNA synthetase family. As to quaternary structure, homodimer. Mg(2+) is required as a cofactor.

It is found in the cytoplasm. The enzyme catalyses tRNA(Lys) + L-lysine + ATP = L-lysyl-tRNA(Lys) + AMP + diphosphate. This chain is Lysine--tRNA ligase, found in Photorhabdus laumondii subsp. laumondii (strain DSM 15139 / CIP 105565 / TT01) (Photorhabdus luminescens subsp. laumondii).